Here is a 99-residue protein sequence, read N- to C-terminus: Aspartyl/glutamyl-tRNA(Asn/Gln) amidotransferase subunit C (99 aa).

Belongs to the GatC family. As to quaternary structure, heterotrimer of A, B and C subunits.

The catalysed reaction is L-glutamyl-tRNA(Gln) + L-glutamine + ATP + H2O = L-glutaminyl-tRNA(Gln) + L-glutamate + ADP + phosphate + H(+). It catalyses the reaction L-aspartyl-tRNA(Asn) + L-glutamine + ATP + H2O = L-asparaginyl-tRNA(Asn) + L-glutamate + ADP + phosphate + 2 H(+). Allows the formation of correctly charged Asn-tRNA(Asn) or Gln-tRNA(Gln) through the transamidation of misacylated Asp-tRNA(Asn) or Glu-tRNA(Gln) in organisms which lack either or both of asparaginyl-tRNA or glutaminyl-tRNA synthetases. The reaction takes place in the presence of glutamine and ATP through an activated phospho-Asp-tRNA(Asn) or phospho-Glu-tRNA(Gln). The protein is Aspartyl/glutamyl-tRNA(Asn/Gln) amidotransferase subunit C of Rhodococcus erythropolis (strain PR4 / NBRC 100887).